A 147-amino-acid polypeptide reads, in one-letter code: 3-dehydroquinate dehydratase (147 aa).

Tyr24 serves as the catalytic Proton acceptor. Residues Asn74, His80, and Asp87 each contribute to the substrate site. Catalysis depends on His100, which acts as the Proton donor. Substrate is bound by residues 101 to 102 (LS) and Arg111.

This sequence belongs to the type-II 3-dehydroquinase family. As to quaternary structure, homododecamer.

It carries out the reaction 3-dehydroquinate = 3-dehydroshikimate + H2O. It functions in the pathway metabolic intermediate biosynthesis; chorismate biosynthesis; chorismate from D-erythrose 4-phosphate and phosphoenolpyruvate: step 3/7. In terms of biological role, catalyzes a trans-dehydration via an enolate intermediate. This chain is 3-dehydroquinate dehydratase, found in Azorhizobium caulinodans (strain ATCC 43989 / DSM 5975 / JCM 20966 / LMG 6465 / NBRC 14845 / NCIMB 13405 / ORS 571).